Here is a 429-residue protein sequence, read N- to C-terminus: MYTKSVELHKEALEHIVGGVNSPSRSYKAVGGGSPVAMEKANGAYFWDVDGNQYIDYLAAYGPIITGHAHPHITEAIKTAAENGVLYGTPTKHEVTFAKMLKEAIPSLDKVRFVNSGTEAVMTTIRVARAYTGRTKIIKFAGCYHGHSDLVLVAAGSGPSTLGTPDSAGVPKSIANEVITVPFNDIESYKAALDKWGSEIAAVLVEPIVGNFGIVEPEEGFLEQVNELTHKAGALVIYDEVITAFRFMYGGAQDLLQVKPDLTALGKIIGGGLPIGAYGGKKEIMEQVAPLGPAYQAGTMAGNPASILSGIACLEVLKEEGVYERLDELGARLEQGILAHAETHGITITVNRLKGALTVYFTDEKIVNYEQAENTDGEAFAKFFKLMLERGINLAPSKYEAWFITTAHTEEDIDATLQAVEDAFRHMKK.

An N6-(pyridoxal phosphate)lysine modification is found at K267.

Belongs to the class-III pyridoxal-phosphate-dependent aminotransferase family. HemL subfamily. In terms of assembly, homodimer. The cofactor is pyridoxal 5'-phosphate.

It localises to the cytoplasm. The catalysed reaction is (S)-4-amino-5-oxopentanoate = 5-aminolevulinate. It participates in porphyrin-containing compound metabolism; protoporphyrin-IX biosynthesis; 5-aminolevulinate from L-glutamyl-tRNA(Glu): step 2/2. The sequence is that of Glutamate-1-semialdehyde 2,1-aminomutase 1 from Bacillus velezensis (strain DSM 23117 / BGSC 10A6 / LMG 26770 / FZB42) (Bacillus amyloliquefaciens subsp. plantarum).